A 152-amino-acid polypeptide reads, in one-letter code: Large ribosomal subunit protein uL22 (152 aa).

It belongs to the universal ribosomal protein uL22 family. As to quaternary structure, part of the 50S ribosomal subunit.

In terms of biological role, this protein binds specifically to 23S rRNA. It makes multiple contacts with different domains of the 23S rRNA in the assembled 50S subunit and ribosome. Functionally, the globular domain of the protein is located near the polypeptide exit tunnel on the outside of the subunit, while an extended beta-hairpin is found that lines the wall of the exit tunnel in the center of the 70S ribosome. The chain is Large ribosomal subunit protein uL22 from Cenarchaeum symbiosum (strain A).